The chain runs to 142 residues: Sorting nexin-3 (142 aa).

One can recognise a PX domain in the interval Asn21–Asp138. The a 1,2-diacyl-sn-glycero-3-phospho-(1D-myo-inositol-3-phosphate) site is built by Arg64, Ser66, Lys90, Arg95, and Arg104.

Belongs to the sorting nexin family.

It localises to the cytoplasm. It is found in the golgi apparatus membrane. The protein resides in the prevacuolar compartment membrane. Its function is as follows. Required for retention of late Golgi membrane proteins. Component of the retrieval machinery that functions by direct interaction with the cytosolic tails of certain TGN membrane proteins during the sorting/budding process at the prevacuolar compartment. Binds phosphatidylinositol 3-phosphate (PtdIns(P3)). The sequence is that of Sorting nexin-3 (snx3) from Aspergillus fumigatus (strain ATCC MYA-4609 / CBS 101355 / FGSC A1100 / Af293) (Neosartorya fumigata).